A 372-amino-acid chain; its full sequence is L-selectin (372 aa).

The N-terminal stretch at 1–28 (MVFPWRCQSAQRGSWSFLKLWIRTLLCC) is a signal peptide. A propeptide spanning residues 29–38 (DLLPHHGTHC) is cleaved from the precursor. Residues 39–332 (WTYHYSERSM…FSKIKEGDYN (294 aa)) lie on the Extracellular side of the membrane. One can recognise a C-type lectin domain in the interval 55-155 (KFCKHNYTDL…ACHKRKAALC (101 aa)). 10 disulfide bridges follow: Cys-57/Cys-155, Cys-128/Cys-147, Cys-128/Cys-160, Cys-160/Cys-171, Cys-165/Cys-180, Cys-182/Cys-191, Cys-197/Cys-241, Cys-227/Cys-254, Cys-259/Cys-303, and Cys-289/Cys-316. N-linked (GlcNAc...) asparagine glycosylation is found at Asn-60 and Asn-104. 5 residues coordinate Ca(2+): Glu-118, Asn-120, Glu-126, Asn-143, and Asp-144. The EGF-like domain maps to 156 to 192 (YTASCQPESCNRHGECVETINNNTCICDPGYYGPQCQ). Residue Asn-177 is glycosylated (N-linked (GlcNAc...) asparagine). 2 consecutive Sushi domains span residues 195 to 256 (IQCE…ICQV) and 257 to 318 (IQCM…ICQK). N-linked (GlcNAc...) asparagine glycans are attached at residues Asn-226, Asn-246, and Asn-278. Residues 333 to 355 (PLFIPVAVMVTAFSGLAFIIWLA) traverse the membrane as a helical segment. Topologically, residues 356–372 (RRLKKGKKSQERMDDPY) are cytoplasmic.

This sequence belongs to the selectin/LECAM family. Interaction with SELPLG/PSGL1 and PODXL2 is required for promoting recruitment and rolling of leukocytes. This interaction is dependent on the sialyl Lewis X glycan modification of SELPLG and PODXL2, and tyrosine sulfation modifications of SELPLG. Sulfation on 'Tyr-51' of SELPLG is important for L-selectin binding. In terms of processing, N-glycosylated. Expressed in peripheral blood mononuclear cells (PBMC), spleen and thymus.

It is found in the cell membrane. Its function is as follows. Calcium-dependent lectin that mediates cell adhesion by binding to glycoproteins on neighboring cells. Mediates the adherence of lymphocytes to endothelial cells of high endothelial venules in peripheral lymph nodes. Promotes initial tethering and rolling of leukocytes in endothelia. The chain is L-selectin (Sell) from Rattus norvegicus (Rat).